The following is a 444-amino-acid chain: Elongation factor 1-alpha (444 aa).

The region spanning 14–235 (KPHLNLAIIG…ALDAIEPPPR (222 aa)) is the tr-type G domain. Positions 23-30 (GHVDHGKS) are G1. 23 to 30 (GHVDHGKS) is a GTP binding site. Ser30 lines the Mg(2+) pocket. The segment at 79-83 (GVTIE) is G2. Residues 100-103 (DLPG) are G3. Residues 100 to 104 (DLPGH) and 162 to 165 (NKMD) contribute to the GTP site. Residues 162 to 165 (NKMD) form a G4 region. Residues 201–203 (SAV) are G5.

The protein belongs to the TRAFAC class translation factor GTPase superfamily. Classic translation factor GTPase family. EF-Tu/EF-1A subfamily.

It is found in the cytoplasm. The enzyme catalyses GTP + H2O = GDP + phosphate + H(+). In terms of biological role, GTP hydrolase that promotes the GTP-dependent binding of aminoacyl-tRNA to the A-site of ribosomes during protein biosynthesis. The sequence is that of Elongation factor 1-alpha from Caldivirga maquilingensis (strain ATCC 700844 / DSM 13496 / JCM 10307 / IC-167).